The following is a 166-amino-acid chain: Endoribonuclease YbeY (166 aa).

Residues His-131, His-135, and His-141 each coordinate Zn(2+).

The protein belongs to the endoribonuclease YbeY family. It depends on Zn(2+) as a cofactor.

It localises to the cytoplasm. In terms of biological role, single strand-specific metallo-endoribonuclease involved in late-stage 70S ribosome quality control and in maturation of the 3' terminus of the 16S rRNA. The sequence is that of Endoribonuclease YbeY from Dehalococcoides mccartyi (strain CBDB1).